Here is a 368-residue protein sequence, read N- to C-terminus: DnaJ homolog subfamily C member 25 (368 aa).

Residues 25-47 (MQPRLFVLVALSVLLLSGRAGAL) form a helical membrane-spanning segment. The J domain occupies 57–132 (VCYDVLGVSR…ETRKDYDYML (76 aa)). The next 2 membrane-spanning stretches (helical) occupy residues 158–178 (IVILVSVCAISIFQYYSWWSS) and 252–272 (ILLFQIILFPYYIFKYISWYV).

It belongs to the DNAJC25 family.

The protein resides in the membrane. The chain is DnaJ homolog subfamily C member 25 (dnajc25) from Xenopus tropicalis (Western clawed frog).